We begin with the raw amino-acid sequence, 624 residues long: MSKVIGIDLGTTNSAVAVLEGNQPKIITNPEGNRTTPSVVAFKDGEIQVGEVAKRQAITNPDTIVSIKRHMGEANYKVKVGDKEYTPQEISAMILQYIKKFSEDYLGEPVKDAVITVPAYFNDSQRQATKDAGKIAGLNVQRIINEPTASALAYGLDKGDKDEKILVYDLGGGTFDVSILQLGDGVFEVLSTNGDTHLGGDDFDNKIIDWLVAEFKKDNNIDLSKDKMAMQRLKDAAEKAKKDLSGVTQTQISLPFISAGPNGPLHLERTLTRAQFDEMTADLVAKTKIPVENALKDAKLTNADIDKVILNGGSTRTPAVQEAVKQWTGKDPDHSINPDEAVALGAAIQGGVISGDVKDVVLLDVTPLSLGIETMGGVFTKLIDRNTTIPTSKSQVFSTAADSQPAVDIHVLQGERPMAADDKTLGRFELTDIPPAPRGVPQIEVKFDIDKNGIVQVSAKDLGTGKSQNITIKSSSGLSDEEIERMKKEAEENADADEKRKEEVDLKNDVDQLLFQTDKTLKDVDGKVPEEDIKKVKDAQEALKKAQQENNLDDMKQKRDDLSKLVQDMTVKLYENAQKNQQAQGGPASGAATDAGAAQGSDDKKSDDDTINGDYKDVSDDDKK.

Phosphothreonine; by autocatalysis is present on T174. Disordered stretches follow at residues 544–563 and 576–624; these read KKAQ…DDLS and NAQK…DDKK. A compositionally biased stretch (low complexity) spans 581 to 600; sequence QQAQGGPASGAATDAGAAQG. A compositionally biased stretch (basic and acidic residues) spans 601–624; the sequence is SDDKKSDDDTINGDYKDVSDDDKK.

Belongs to the heat shock protein 70 family.

Acts as a chaperone. This is Chaperone protein DnaK from Lacticaseibacillus casei (strain BL23) (Lactobacillus casei).